We begin with the raw amino-acid sequence, 211 residues long: MEKHKNISMAVIKRLPKYHRYLEELMKNEVDRISSKELGEKIGFTASQIRQDLNCFGDFGQQGYGYNVKELYTQISAILGLDRGYEAALVGAGNIGQAVSNYSRFENLGFKITAIFDANPKLIGMKIRDVEIMDIDEMESVLEEHKIDIGIICVPRKNAQVVADELIRGGVRAIWNFAPVDLVVPDHVKVENVHLSESLLTLIYLLNESES.

Residues 17 to 56 constitute a DNA-binding region (H-T-H motif); the sequence is KYHRYLEELMKNEVDRISSKELGEKIGFTASQIRQDLNCF. 91–96 lines the NAD(+) pocket; it reads GAGNIG.

It belongs to the transcriptional regulatory Rex family. Homodimer.

The protein localises to the cytoplasm. Modulates transcription in response to changes in cellular NADH/NAD(+) redox state. This is Redox-sensing transcriptional repressor Rex from Clostridium beijerinckii (strain ATCC 51743 / NCIMB 8052) (Clostridium acetobutylicum).